The sequence spans 478 residues: Dihydrolipoyl dehydrogenase (478 aa).

Residues 36-45, K54, and A117 each bind FAD; that span reads ERYSTLGGVC. C45 and C50 are oxidised to a cystine. NAD(+) contacts are provided by residues 183 to 187, E206, V239, and 270 to 273; these read GGGII and AIGR. 2 residues coordinate FAD: D313 and A321. H445 (proton acceptor) is an active-site residue.

It belongs to the class-I pyridine nucleotide-disulfide oxidoreductase family. In terms of assembly, homodimer. FAD is required as a cofactor.

It localises to the cytoplasm. The catalysed reaction is N(6)-[(R)-dihydrolipoyl]-L-lysyl-[protein] + NAD(+) = N(6)-[(R)-lipoyl]-L-lysyl-[protein] + NADH + H(+). In terms of biological role, lipoamide dehydrogenase is a component of the alpha-ketoacid dehydrogenase complexes. This Haemophilus influenzae (strain ATCC 51907 / DSM 11121 / KW20 / Rd) protein is Dihydrolipoyl dehydrogenase (lpdA).